The following is a 199-amino-acid chain: uncharacterized protein (199 aa).

Helical transmembrane passes span 41 to 61, 72 to 92, 109 to 129, and 145 to 165; these read LFIPPSACRIDLSVFPWAFIC, SLICSPCFSTVWVSLLICSPW, TVWVNLLICSPWAAKVVSIFV, and VTYSVFTGITGLLSLNCLLNL.

To M.pneumoniae MPN_037.

The protein localises to the cell membrane. This is an uncharacterized protein from Mycoplasma pneumoniae (strain ATCC 29342 / M129 / Subtype 1) (Mycoplasmoides pneumoniae).